The sequence spans 498 residues: NAC domain-containing protein 75 (498 aa).

The NAC domain occupies 48 to 215 (LPAGVKFDPT…ELVVSKIFYQ (168 aa)). Residues 166 to 221 (KGCKKILVLYTNFGKNRKPEKTNWVMHQYHLGTHEEEKEGELVVSKIFYQTQPRQC) mediate DNA binding. Disordered stretches follow at residues 225–278 (SSTS…PNRS), 338–374 (VMAEQHRHRHQPSSSTSHHMAHDHHHHHHQQQQQRHH), 423–443 (QQQLRQEGEEEHNDGKMGGRS), and 457–498 (STTH…DHHG). Gly residues predominate over residues 233-248 (IGGGGGEASSGGGGGE). Residues 256–266 (GTTSGGSCSSS) show a composition bias toward low complexity. Positions 356-374 (HMAHDHHHHHHQQQQQRHH) are enriched in basic residues. A compositionally biased stretch (polar residues) spans 466–475 (GSSSMGNQQE).

In terms of tissue distribution, expressed in the vascular cylinder of roots. Expressed in the differentiation zone of the root stele.

The protein localises to the nucleus. In terms of biological role, transcription activator involved in xylem formation. Promotes the expression of the secondary wall-associated transcription factor MYB46. Functions upstream of NAC030/VND7, a master switch of xylem vessel differentiation. Acts as a upstream regulator of NAC101/VND6 and LBD30/ASL19. In Arabidopsis thaliana (Mouse-ear cress), this protein is NAC domain-containing protein 75.